Here is a 290-residue protein sequence, read N- to C-terminus: Lipoyl synthase (290 aa).

[4Fe-4S] cluster is bound by residues Cys44, Cys49, Cys55, Cys70, Cys74, Cys77, and Ser281. Residues 56-270 form the Radical SAM core domain; the sequence is WRCGTATFMI…KQIGLEKGFS (215 aa).

This sequence belongs to the radical SAM superfamily. Lipoyl synthase family. [4Fe-4S] cluster serves as cofactor.

It is found in the cytoplasm. It catalyses the reaction [[Fe-S] cluster scaffold protein carrying a second [4Fe-4S](2+) cluster] + N(6)-octanoyl-L-lysyl-[protein] + 2 oxidized [2Fe-2S]-[ferredoxin] + 2 S-adenosyl-L-methionine + 4 H(+) = [[Fe-S] cluster scaffold protein] + N(6)-[(R)-dihydrolipoyl]-L-lysyl-[protein] + 4 Fe(3+) + 2 hydrogen sulfide + 2 5'-deoxyadenosine + 2 L-methionine + 2 reduced [2Fe-2S]-[ferredoxin]. It participates in protein modification; protein lipoylation via endogenous pathway; protein N(6)-(lipoyl)lysine from octanoyl-[acyl-carrier-protein]: step 2/2. Catalyzes the radical-mediated insertion of two sulfur atoms into the C-6 and C-8 positions of the octanoyl moiety bound to the lipoyl domains of lipoate-dependent enzymes, thereby converting the octanoylated domains into lipoylated derivatives. This is Lipoyl synthase from Treponema denticola (strain ATCC 35405 / DSM 14222 / CIP 103919 / JCM 8153 / KCTC 15104).